We begin with the raw amino-acid sequence, 520 residues long: Bifunctional purine biosynthesis protein PurH (520 aa).

In terms of domain architecture, MGS-like spans 1-150 (MSDDRKAIKR…KNHPSVAVVV (150 aa)).

This sequence belongs to the PurH family.

The enzyme catalyses (6R)-10-formyltetrahydrofolate + 5-amino-1-(5-phospho-beta-D-ribosyl)imidazole-4-carboxamide = 5-formamido-1-(5-phospho-D-ribosyl)imidazole-4-carboxamide + (6S)-5,6,7,8-tetrahydrofolate. The catalysed reaction is IMP + H2O = 5-formamido-1-(5-phospho-D-ribosyl)imidazole-4-carboxamide. It functions in the pathway purine metabolism; IMP biosynthesis via de novo pathway; 5-formamido-1-(5-phospho-D-ribosyl)imidazole-4-carboxamide from 5-amino-1-(5-phospho-D-ribosyl)imidazole-4-carboxamide (10-formyl THF route): step 1/1. It participates in purine metabolism; IMP biosynthesis via de novo pathway; IMP from 5-formamido-1-(5-phospho-D-ribosyl)imidazole-4-carboxamide: step 1/1. This Corynebacterium glutamicum (strain R) protein is Bifunctional purine biosynthesis protein PurH.